Here is a 582-residue protein sequence, read N- to C-terminus: DnaJ protein ERDJ3A (582 aa).

Residues 1 to 25 (MGIPVRSLLVASIVLSSIALHVAAA) form the signal peptide. The J domain maps to 29-93 (DPYKVLGVDK…EKRKNYDLYG (65 aa)). N-linked (GlcNAc...) asparagine glycosylation occurs at Asn-61. The tract at residues 178–201 (GGSQHTGSAGKARRGTKSSGHDSS) is disordered. The stretch at 407–437 (VKDLRSGIKELKNLLENFEKKNKKLASNQAK) forms a coiled coil.

Interacts with BIP5.

The protein resides in the endoplasmic reticulum. It is found in the vacuole. May play a role in protein folding in the endoplasmic reticulum. This is DnaJ protein ERDJ3A from Oryza sativa subsp. japonica (Rice).